Here is a 1775-residue protein sequence, read N- to C-terminus: Protein TIC 214 (1775 aa).

6 helical membrane-spanning segments follow: residues 19–39, 68–88, 91–111, 133–153, 176–196, and 227–247; these read IINS…FSIG, FIAG…HLAL, PHTI…WNNH, VFLN…SSML, VGWL…LVWI, and IFSI…PSPI. Residues 1491-1512 are disordered; it reads KESAGQGERESDNEKKKNLESA.

Belongs to the TIC214 family. Part of the Tic complex.

The protein localises to the plastid. Its subcellular location is the chloroplast inner membrane. Functionally, involved in protein precursor import into chloroplasts. May be part of an intermediate translocation complex acting as a protein-conducting channel at the inner envelope. This chain is Protein TIC 214, found in Lobularia maritima (Sweet alyssum).